The sequence spans 360 residues: DNA replication and repair protein RecF (360 aa).

33–40 (GENGSGKT) serves as a coordination point for ATP.

The protein belongs to the RecF family.

Its subcellular location is the cytoplasm. Its function is as follows. The RecF protein is involved in DNA metabolism; it is required for DNA replication and normal SOS inducibility. RecF binds preferentially to single-stranded, linear DNA. It also seems to bind ATP. The sequence is that of DNA replication and repair protein RecF from Rickettsia peacockii (strain Rustic).